Reading from the N-terminus, the 712-residue chain is MTAPTVPADQHGHPLPGPADPAANDTWRPSRYREPLHPDNEEVLEQAAYQAAVTRSSGDDRKRKIKPRRTVDYQGGVQKWRMLNKLKGVHEFRPAIHPNPSDIVNFLPPVALRSNPSTSICDYWVHTSINKERSPTRVVRWTPDARRLLTGNDKGQFTLWNGASFNYESITQVHDDSIRSFTYSHNGQALVSADKGGTIKYFTPHLTNIHGFQGHREACHDVSWSPNDERFVTCGDDGLVKIWSYREAKEERSLSGHGWDVRCVDWHPTKGLIVSGSKDMLVKFWDPRTGKDLSTLHSSKSTINTCRWSPDGHLVATAGQDSVIRLFDIRTFRELEVLKGHEKEVNCIEWHPIHHSLLVSGDALGTINYFSLLSPTPSTPITTLSAAHEDAVFSLSFHPLGHILCSGSKDFTARFWCRARPPGGQEFDKWHLTEEGAAQKELERITKREWGTNAPPANAAGGGGGGGGDKQQVALPGLSNLVAAVNSVKTGPTTTGGGPSGLPGLGAPNVHAGTPPSRVSTPSSMGPPGPGAQGQAQGGQFPRGRSALPSQNDMLRHNHGSRGGFADRDRNGGGDRGGMDRDRDSRGGRQDPRGNQMYGRGPGGPPPGPPPGQGGYNYPPAPPNYPPYPPSSYPPPPNNQPGYPPAPNYAMPPGPGAPPQSYPYNRPPQGPPQNNNPGGQGNYGASASGGYGQYGGGGGGGGGGGYGRDGRR.

The disordered stretch occupies residues M1–H37. WD repeat units lie at residues K131–I170, V173–Q213, G214–S253, G256–T295, S298–V337, G340–P380, and A387–E426. Disordered stretches follow at residues T446–V473 and K489–R712. 2 stretches are compositionally biased toward gly residues: residues A460 to D469 and T494 to G504. A compositionally biased stretch (low complexity) spans Q533–R545. Basic and acidic residues predominate over residues F565 to P592. Pro residues-rich tracts occupy residues G603–G612 and P619–P671. Residues G678–R712 show a composition bias toward gly residues.

The protein localises to the nucleus. Functionally, required for 3'-end cleavage and polyadenylation of pre-mRNAs. Also involved in chromosome segregation where it has a role in chromosome attachment to the mitotic spindle. The protein is Polyadenylation factor subunit 2 (PFS2) of Cryptococcus neoformans var. neoformans serotype D (strain JEC21 / ATCC MYA-565) (Filobasidiella neoformans).